We begin with the raw amino-acid sequence, 160 residues long: Cyclic pyranopterin monophosphate synthase (160 aa).

Substrate-binding positions include 74–76 (LSH) and 112–113 (ME). Aspartate 127 is an active-site residue.

The protein belongs to the MoaC family. As to quaternary structure, homohexamer; trimer of dimers.

It catalyses the reaction (8S)-3',8-cyclo-7,8-dihydroguanosine 5'-triphosphate = cyclic pyranopterin phosphate + diphosphate. It functions in the pathway cofactor biosynthesis; molybdopterin biosynthesis. In terms of biological role, catalyzes the conversion of (8S)-3',8-cyclo-7,8-dihydroguanosine 5'-triphosphate to cyclic pyranopterin monophosphate (cPMP). This chain is Cyclic pyranopterin monophosphate synthase, found in Geobacter metallireducens (strain ATCC 53774 / DSM 7210 / GS-15).